Consider the following 96-residue polypeptide: Aspartyl/glutamyl-tRNA(Asn/Gln) amidotransferase subunit C (96 aa).

This sequence belongs to the GatC family. Heterotrimer of A, B and C subunits.

The catalysed reaction is L-glutamyl-tRNA(Gln) + L-glutamine + ATP + H2O = L-glutaminyl-tRNA(Gln) + L-glutamate + ADP + phosphate + H(+). It carries out the reaction L-aspartyl-tRNA(Asn) + L-glutamine + ATP + H2O = L-asparaginyl-tRNA(Asn) + L-glutamate + ADP + phosphate + 2 H(+). In terms of biological role, allows the formation of correctly charged Asn-tRNA(Asn) or Gln-tRNA(Gln) through the transamidation of misacylated Asp-tRNA(Asn) or Glu-tRNA(Gln) in organisms which lack either or both of asparaginyl-tRNA or glutaminyl-tRNA synthetases. The reaction takes place in the presence of glutamine and ATP through an activated phospho-Asp-tRNA(Asn) or phospho-Glu-tRNA(Gln). The polypeptide is Aspartyl/glutamyl-tRNA(Asn/Gln) amidotransferase subunit C (Sulfurimonas denitrificans (strain ATCC 33889 / DSM 1251) (Thiomicrospira denitrificans (strain ATCC 33889 / DSM 1251))).